We begin with the raw amino-acid sequence, 593 residues long: Proline--tRNA ligase (593 aa).

The protein belongs to the class-II aminoacyl-tRNA synthetase family. ProS type 1 subfamily. As to quaternary structure, homodimer.

Its subcellular location is the cytoplasm. It catalyses the reaction tRNA(Pro) + L-proline + ATP = L-prolyl-tRNA(Pro) + AMP + diphosphate. In terms of biological role, catalyzes the attachment of proline to tRNA(Pro) in a two-step reaction: proline is first activated by ATP to form Pro-AMP and then transferred to the acceptor end of tRNA(Pro). As ProRS can inadvertently accommodate and process non-cognate amino acids such as alanine and cysteine, to avoid such errors it has two additional distinct editing activities against alanine. One activity is designated as 'pretransfer' editing and involves the tRNA(Pro)-independent hydrolysis of activated Ala-AMP. The other activity is designated 'posttransfer' editing and involves deacylation of mischarged Ala-tRNA(Pro). The misacylated Cys-tRNA(Pro) is not edited by ProRS. The sequence is that of Proline--tRNA ligase from Synechococcus sp. (strain CC9902).